The chain runs to 197 residues: 3-isopropylmalate dehydratase small subunit (197 aa).

The protein belongs to the LeuD family. LeuD type 1 subfamily. As to quaternary structure, heterodimer of LeuC and LeuD.

It carries out the reaction (2R,3S)-3-isopropylmalate = (2S)-2-isopropylmalate. It participates in amino-acid biosynthesis; L-leucine biosynthesis; L-leucine from 3-methyl-2-oxobutanoate: step 2/4. In terms of biological role, catalyzes the isomerization between 2-isopropylmalate and 3-isopropylmalate, via the formation of 2-isopropylmaleate. This is 3-isopropylmalate dehydratase small subunit from Corynebacterium glutamicum (strain ATCC 13032 / DSM 20300 / JCM 1318 / BCRC 11384 / CCUG 27702 / LMG 3730 / NBRC 12168 / NCIMB 10025 / NRRL B-2784 / 534).